The following is a 365-amino-acid chain: tRNA/tmRNA (uracil-C(5))-methyltransferase (365 aa).

Positions 189, 217, 222, 238, and 298 each coordinate S-adenosyl-L-methionine. Cys-323 functions as the Nucleophile in the catalytic mechanism. The active-site Proton acceptor is the Glu-357.

This sequence belongs to the class I-like SAM-binding methyltransferase superfamily. RNA M5U methyltransferase family. TrmA subfamily.

It catalyses the reaction uridine(54) in tRNA + S-adenosyl-L-methionine = 5-methyluridine(54) in tRNA + S-adenosyl-L-homocysteine + H(+). The enzyme catalyses uridine(341) in tmRNA + S-adenosyl-L-methionine = 5-methyluridine(341) in tmRNA + S-adenosyl-L-homocysteine + H(+). Dual-specificity methyltransferase that catalyzes the formation of 5-methyluridine at position 54 (m5U54) in all tRNAs, and that of position 341 (m5U341) in tmRNA (transfer-mRNA). The polypeptide is tRNA/tmRNA (uracil-C(5))-methyltransferase (Shewanella sp. (strain MR-4)).